Consider the following 365-residue polypeptide: Peptide chain release factor 2 (365 aa).

N5-methylglutamine is present on Gln-252.

Belongs to the prokaryotic/mitochondrial release factor family. Methylated by PrmC. Methylation increases the termination efficiency of RF2.

It is found in the cytoplasm. Its function is as follows. Peptide chain release factor 2 directs the termination of translation in response to the peptide chain termination codons UGA and UAA. In Shewanella woodyi (strain ATCC 51908 / MS32), this protein is Peptide chain release factor 2.